Here is an 801-residue protein sequence, read N- to C-terminus: uncharacterized protein (801 aa).

The PE domain occupies 1-93 (MSWVMVSPEL…GGAYAAAEAA (93 aa)).

The protein belongs to the mycobacterial PE family. PGRS subfamily.

This is an uncharacterized protein from Mycobacterium tuberculosis (strain ATCC 25618 / H37Rv).